The sequence spans 156 residues: ATP synthase subunit b (156 aa).

Residues Leu11–Asn31 traverse the membrane as a helical segment.

It belongs to the ATPase B chain family. As to quaternary structure, F-type ATPases have 2 components, F(1) - the catalytic core - and F(0) - the membrane proton channel. F(1) has five subunits: alpha(3), beta(3), gamma(1), delta(1), epsilon(1). F(0) has three main subunits: a(1), b(2) and c(10-14). The alpha and beta chains form an alternating ring which encloses part of the gamma chain. F(1) is attached to F(0) by a central stalk formed by the gamma and epsilon chains, while a peripheral stalk is formed by the delta and b chains.

The protein resides in the cell inner membrane. Its function is as follows. F(1)F(0) ATP synthase produces ATP from ADP in the presence of a proton or sodium gradient. F-type ATPases consist of two structural domains, F(1) containing the extramembraneous catalytic core and F(0) containing the membrane proton channel, linked together by a central stalk and a peripheral stalk. During catalysis, ATP synthesis in the catalytic domain of F(1) is coupled via a rotary mechanism of the central stalk subunits to proton translocation. In terms of biological role, component of the F(0) channel, it forms part of the peripheral stalk, linking F(1) to F(0). The chain is ATP synthase subunit b from Haemophilus influenzae (strain PittGG).